The sequence spans 122 residues: uncharacterized protein (122 aa).

The 111-residue stretch at 10 to 120 folds into the HIT domain; sequence VFARILRGEI…AGRRLGPMIT (111 aa). Positions 104–108 match the Histidine triad motif motif; it reads HLHIH.

This is an uncharacterized protein from Azospirillum brasilense.